Reading from the N-terminus, the 346-residue chain is Annexin A1 (346 aa).

Ser5 carries the post-translational modification Phosphoserine; by TRPM7. An Isoglutamyl lysine isopeptide (Gln-Lys) (interchain with K-?) cross-link involves residue Gln19. At Tyr21 the chain carries Phosphotyrosine; by EGFR. Phosphoserine is present on residues Ser34 and Ser37. 4 Annexin repeats span residues 42–113 (FNPS…ALLK), 114–185 (TPAR…SLAK), 197–269 (DLAD…AIVK), and 273–344 (SKPM…ALCG). An N6-acetyllysine modification is found at Lys58. The Ca(2+) site is built by Gly59, Val60, Glu62, Lys97, Leu100, Glu105, Met127, Gly129, Gly131, Thr132, and Glu134. Thr136 bears the Phosphothreonine mark. Ca(2+) contacts are provided by Asp171, Gly210, and Arg213. Lys214 is covalently cross-linked (Glycyl lysine isopeptide (Lys-Gly) (interchain with G-Cter in SUMO1); alternate). A Glycyl lysine isopeptide (Lys-Gly) (interchain with G-Cter in SUMO2); alternate cross-link involves residue Lys214. Positions 215, 253, 255, and 256 each coordinate Ca(2+). A Glycyl lysine isopeptide (Lys-Gly) (interchain with G-Cter in SUMO1) cross-link involves residue Lys257. Ca(2+) contacts are provided by Glu261, Met286, Gly288, and Gly290. At Lys312 the chain carries N6-acetyllysine. An intrachain disulfide couples Cys324 to Cys343. Ca(2+) contacts are provided by Leu328, Glu330, and Thr331. A Glycyl lysine isopeptide (Lys-Gly) (interchain with G-Cter in SUMO1) cross-link involves residue Lys332. Glu336 is a binding site for Ca(2+).

It belongs to the annexin family. As to quaternary structure, homodimer; non-covalently linked. Homodimer; linked by transglutamylation. Homodimers linked by transglutamylation are observed in placenta, but not in other tissues. Interacts with S100A11. Heterotetramer, formed by two molecules each of S100A11 and ANXA1. Interacts with DYSF. Interacts with EGFR. In terms of processing, phosphorylated by protein kinase C, EGFR and TRPM7. Phosphorylated in response to EGF treatment. Sumoylated. Post-translationally, proteolytically cleaved by cathepsin CTSG to release the active N-terminal peptide Ac2-26.

The protein resides in the nucleus. Its subcellular location is the cytoplasm. The protein localises to the cell projection. It is found in the cilium. It localises to the basolateral cell membrane. The protein resides in the lateral cell membrane. Its subcellular location is the cell membrane. The protein localises to the apical cell membrane. It is found in the membrane. It localises to the early endosome. The protein resides in the cytoplasmic vesicle membrane. Its subcellular location is the endosome membrane. The protein localises to the secreted. It is found in the extracellular space. It localises to the extracellular exosome. The protein resides in the cytoplasmic vesicle. Its subcellular location is the secretory vesicle lumen. The protein localises to the phagocytic cup. Functionally, plays important roles in the innate immune response as effector of glucocorticoid-mediated responses and regulator of the inflammatory process. Has anti-inflammatory activity. Plays a role in glucocorticoid-mediated down-regulation of the early phase of the inflammatory response. Contributes to the adaptive immune response by enhancing signaling cascades that are triggered by T-cell activation, regulates differentiation and proliferation of activated T-cells. Promotes the differentiation of T-cells into Th1 cells and negatively regulates differentiation into Th2 cells. Has no effect on unstimulated T-cells. Negatively regulates hormone exocytosis via activation of the formyl peptide receptors and reorganization of the actin cytoskeleton. Has high affinity for Ca(2+) and can bind up to eight Ca(2+) ions. Displays Ca(2+)-dependent binding to phospholipid membranes. Plays a role in the formation of phagocytic cups and phagosomes. Plays a role in phagocytosis by mediating the Ca(2+)-dependent interaction between phagosomes and the actin cytoskeleton. Its function is as follows. Functions at least in part by activating the formyl peptide receptors and downstream signaling cascades. Promotes chemotaxis of granulocytes and monocytes via activation of the formyl peptide receptors. Promotes rearrangement of the actin cytoskeleton, cell polarization and cell migration. Promotes resolution of inflammation and wound healing. Acts via neutrophil N-formyl peptide receptors to enhance the release of CXCL2. The protein is Annexin A1 (ANXA1) of Equus caballus (Horse).